The following is a 134-amino-acid chain: Fluoride-specific ion channel FluC 2 (134 aa).

Transmembrane regions (helical) follow at residues 8–28, 40–60, 69–89, and 99–119; these read IVAI…LNTW, IENI…LVIV, LGVG…DSVL, and LIYV…GYLL. The Na(+) site is built by G75 and T78.

Belongs to the fluoride channel Fluc/FEX (TC 1.A.43) family.

The protein resides in the cell membrane. The catalysed reaction is fluoride(in) = fluoride(out). Na(+) is not transported, but it plays an essential structural role and its presence is essential for fluoride channel function. Fluoride-specific ion channel. Important for reducing fluoride concentration in the cell, thus reducing its toxicity. This chain is Fluoride-specific ion channel FluC 2, found in Halalkalibacterium halodurans (strain ATCC BAA-125 / DSM 18197 / FERM 7344 / JCM 9153 / C-125) (Bacillus halodurans).